The sequence spans 439 residues: GTPase Der (439 aa).

EngA-type G domains lie at 4–168 (PIVA…KDDE) and 177–352 (INIA…DNYN). GTP contacts are provided by residues 10-17 (GRPNVGKS), 57-61 (DTGGI), 120-123 (NKID), 183-190 (GKPNVGKS), 230-234 (DTAGL), and 295-298 (NKWD). Residues 353–437 (KRVKTGVLND…GIKSEFRERK (85 aa)) enclose the KH-like domain.

The protein belongs to the TRAFAC class TrmE-Era-EngA-EngB-Septin-like GTPase superfamily. EngA (Der) GTPase family. Associates with the 50S ribosomal subunit.

GTPase that plays an essential role in the late steps of ribosome biogenesis. The protein is GTPase Der of Clostridium botulinum (strain ATCC 19397 / Type A).